The chain runs to 809 residues: Histone H2A deubiquitinase MYSM1 (809 aa).

Residues glycine 33–valine 78 enclose the SANT domain. Disordered regions lie at residues proline 113–aspartate 140 and aspartate 320–tyrosine 378. Composition is skewed to basic and acidic residues over residues threonine 335–proline 345 and threonine 363–tyrosine 378. Residues phenylalanine 410 to glutamate 508 form the SWIRM domain. Residues valine 592 to serine 719 form the MPN domain. 3 residues coordinate Zn(2+): histidine 671, histidine 673, and aspartate 684. The JAMM motif motif lies at histidine 671–aspartate 684.

Belongs to the peptidase M67A family. MYSM1 subfamily.

It localises to the nucleus. Functionally, metalloprotease that specifically deubiquitinates monoubiquitinated histone H2A, a specific tag for epigenetic transcriptional repression, thereby acting as a coactivator. Preferentially deubiquitinates monoubiquitinated H2A in hyperacetylated nucleosomes. Deubiquitination of histone H2A leads to facilitate the phosphorylation and dissociation of histone H1 from the nucleosome. Acts as a coactivator by participating in the initiation and elongation steps of androgen receptor (AR)-induced gene activation. In Branchiostoma floridae (Florida lancelet), this protein is Histone H2A deubiquitinase MYSM1 (MYSM1).